Here is a 339-residue protein sequence, read N- to C-terminus: MEITLFDPIDAHLHVRENALLKAVLRYSSEPFSAAVIMPNLSKPLTDTPTTLEYEEEILNHSSNFKPLMSLYFNDDLTLEELQRAHEKGIRFLKLYPKGMTTNAQNGTSDLLGEKTLEILENAQKLGFILCIHAEQAGFCLDKEFLCHSVLETFALSFPKLKIIIEHLSDWRSIALIEKHANLYATLTLHHISMTLDDLLGGSLNPHCFCKPLIKTKKDQERLLSLALKAHPKISFGSDSAPHFISKKHSTSIPAGIFSAPILLPALCELFEKHNALENLQAFISDNAKKIYALDNLPAKKARLSKKPFIVPTHALCLNEKIAILRGGETLSWNLQEIA.

Residues histidine 12 and histidine 14 each contribute to the Zn(2+) site. Residues 14–16 (HVR) and asparagine 40 contribute to the substrate site. Zn(2+)-binding residues include lysine 94, histidine 133, histidine 167, and aspartate 239. Lysine 94 bears the N6-carboxylysine mark. Substrate is bound at residue histidine 133. The active site involves aspartate 239. Substrate is bound by residues histidine 243 and alanine 255.

Belongs to the metallo-dependent hydrolases superfamily. DHOase family. Class II DHOase subfamily. As to quaternary structure, homodimer. Zn(2+) serves as cofactor.

It catalyses the reaction (S)-dihydroorotate + H2O = N-carbamoyl-L-aspartate + H(+). It functions in the pathway pyrimidine metabolism; UMP biosynthesis via de novo pathway; (S)-dihydroorotate from bicarbonate: step 3/3. In terms of biological role, catalyzes the reversible cyclization of carbamoyl aspartate to dihydroorotate. This Helicobacter pylori (strain P12) protein is Dihydroorotase.